A 73-amino-acid chain; its full sequence is Large ribosomal subunit protein bL31 (73 aa).

Residues C16, C18, C36, and C39 each coordinate Zn(2+).

The protein belongs to the bacterial ribosomal protein bL31 family. Type A subfamily. In terms of assembly, part of the 50S ribosomal subunit. Zn(2+) is required as a cofactor.

Its function is as follows. Binds the 23S rRNA. The polypeptide is Large ribosomal subunit protein bL31 (Desulfosudis oleivorans (strain DSM 6200 / JCM 39069 / Hxd3) (Desulfococcus oleovorans)).